The following is a 179-amino-acid chain: ATP synthase subunit delta (179 aa).

The protein belongs to the ATPase delta chain family. F-type ATPases have 2 components, F(1) - the catalytic core - and F(0) - the membrane proton channel. F(1) has five subunits: alpha(3), beta(3), gamma(1), delta(1), epsilon(1). F(0) has three main subunits: a(1), b(2) and c(10-14). The alpha and beta chains form an alternating ring which encloses part of the gamma chain. F(1) is attached to F(0) by a central stalk formed by the gamma and epsilon chains, while a peripheral stalk is formed by the delta and b chains.

Its subcellular location is the cell inner membrane. Its function is as follows. F(1)F(0) ATP synthase produces ATP from ADP in the presence of a proton or sodium gradient. F-type ATPases consist of two structural domains, F(1) containing the extramembraneous catalytic core and F(0) containing the membrane proton channel, linked together by a central stalk and a peripheral stalk. During catalysis, ATP synthesis in the catalytic domain of F(1) is coupled via a rotary mechanism of the central stalk subunits to proton translocation. In terms of biological role, this protein is part of the stalk that links CF(0) to CF(1). It either transmits conformational changes from CF(0) to CF(1) or is implicated in proton conduction. The chain is ATP synthase subunit delta from Maricaulis maris (strain MCS10) (Caulobacter maris).